Consider the following 513-residue polypeptide: 2,3-bisphosphoglycerate-independent phosphoglycerate mutase (513 aa).

2 residues coordinate Mn(2+): aspartate 13 and serine 63. Serine 63 (phosphoserine intermediate) is an active-site residue. Substrate is bound by residues histidine 124, 154–155 (RD), arginine 186, arginine 192, 262–265 (RADR), and lysine 335. 5 residues coordinate Mn(2+): aspartate 402, histidine 406, aspartate 443, histidine 444, and histidine 462.

Belongs to the BPG-independent phosphoglycerate mutase family. In terms of assembly, monomer. The cofactor is Mn(2+).

It catalyses the reaction (2R)-2-phosphoglycerate = (2R)-3-phosphoglycerate. It functions in the pathway carbohydrate degradation; glycolysis; pyruvate from D-glyceraldehyde 3-phosphate: step 3/5. Its function is as follows. Catalyzes the interconversion of 2-phosphoglycerate and 3-phosphoglycerate. The protein is 2,3-bisphosphoglycerate-independent phosphoglycerate mutase of Photobacterium profundum (strain SS9).